The following is a 535-amino-acid chain: Tetrathionate hydrolase (535 aa).

An N-terminal signal peptide occupies residues 1-39 (MNLKILVGLFILGIIILSAMTFLNFTTIVAQDKGDQQPK). Asn50 carries N-linked (GlcNAc...) asparagine glycosylation.

The protein belongs to the tetrathionate hydrolase family. In terms of assembly, monomer and homodimer; in equilibrium.

The protein localises to the cell surface. It carries out the reaction tetrathionate + H2O = sulfur + thiosulfate + sulfate + H(+). Functionally, catalyzes the hydrolysis of tetrathionate to generate elemental sulfur, thiosulfate and sulfate. The polypeptide is Tetrathionate hydrolase (Acidianus ambivalens (Desulfurolobus ambivalens)).